We begin with the raw amino-acid sequence, 719 residues long: Polyribonucleotide nucleotidyltransferase (719 aa).

Mg(2+)-binding residues include Asp-491 and Asp-497. The KH domain occupies 558-617 (PRMLTIKINPEKIRDVIGKGGATIRALTEETGTQIDISDDGTIVIASVDETQAKEAQRRI). In terms of domain architecture, S1 motif spans 627–695 (GQIYDGSVLR…DKGRLRLSIK (69 aa)).

Belongs to the polyribonucleotide nucleotidyltransferase family. It depends on Mg(2+) as a cofactor.

It localises to the cytoplasm. The catalysed reaction is RNA(n+1) + phosphate = RNA(n) + a ribonucleoside 5'-diphosphate. Functionally, involved in mRNA degradation. Catalyzes the phosphorolysis of single-stranded polyribonucleotides processively in the 3'- to 5'-direction. The polypeptide is Polyribonucleotide nucleotidyltransferase (Bordetella parapertussis (strain 12822 / ATCC BAA-587 / NCTC 13253)).